The following is a 636-amino-acid chain: Zinc finger protein 90 (636 aa).

In terms of domain architecture, KRAB spans 14–85; that stretch reads VTFKDVAVNF…EKEIQRPFCP (72 aa). 7 C2H2-type zinc fingers span residues 208–230, 250–272, 278–300, 306–328, 334–356, 362–384, and 390–412; these read YKCD…EKIH, HECA…QRIH, FECN…ENAH, YQCS…QRIH, YRCN…EVTH, FQCK…ERTH, and FECS…MRIH. Positions 227 to 247 are disordered; the sequence is EKIHKGDPYSNGTDQGAQSGR. K444 is covalently cross-linked (Glycyl lysine isopeptide (Lys-Gly) (interchain with G-Cter in SUMO2)). 6 consecutive C2H2-type zinc fingers follow at residues 446–468, 494–516, 522–544, 550–572, 578–600, and 606–628; these read YHCN…QRLH, YQCN…HRIH, YECN…ERTH, YECI…ERTH, YECN…QRTH, and YACK…HRVH.

Belongs to the krueppel C2H2-type zinc-finger protein family. Interacts (via N- and C-termini) with REST (via zinc-finger DNA-binding domain); the interaction inhibits REST repressor activity. In terms of tissue distribution, brain, spleen, thymus, and testis. Expressed in heart.

Its subcellular location is the nucleus. In terms of biological role, inhibits the transcriptional repressor activity of REST by inhibiting its binding to DNA, thereby derepressing transcription of REST target genes. The protein is Zinc finger protein 90 (Zfp90) of Mus musculus (Mouse).